Here is a 597-residue protein sequence, read N- to C-terminus: Medium/long-chain-fatty-acid--CoA ligase FadD6 (597 aa).

Belongs to the ATP-dependent AMP-binding enzyme family.

It catalyses the reaction a medium-chain fatty acid + ATP + CoA = a medium-chain fatty acyl-CoA + AMP + diphosphate. It carries out the reaction a long-chain fatty acid + ATP + CoA = a long-chain fatty acyl-CoA + AMP + diphosphate. The catalysed reaction is hexanoate + ATP + CoA = hexanoyl-CoA + AMP + diphosphate. The enzyme catalyses octanoate + ATP + CoA = octanoyl-CoA + AMP + diphosphate. It catalyses the reaction decanoate + ATP + CoA = decanoyl-CoA + AMP + diphosphate. It carries out the reaction dodecanoate + ATP + CoA = dodecanoyl-CoA + AMP + diphosphate. The catalysed reaction is tetradecanoate + ATP + CoA = tetradecanoyl-CoA + AMP + diphosphate. The enzyme catalyses hexadecanoate + ATP + CoA = hexadecanoyl-CoA + AMP + diphosphate. It catalyses the reaction octadecanoate + ATP + CoA = octadecanoyl-CoA + AMP + diphosphate. It carries out the reaction 9-decenoate + ATP + CoA = 9-decenoyl-CoA + AMP + diphosphate. The catalysed reaction is (9Z)-octadecenoate + ATP + CoA = (9Z)-octadecenoyl-CoA + AMP + diphosphate. The enzyme catalyses 2-hydroxyhexadecanoate + ATP + CoA = 2-hydroxyhexadecanoyl-CoA + AMP + diphosphate. It catalyses the reaction 3-hydroxytetradecanoate + ATP + CoA = 3-hydroxytetradecanoyl-CoA + AMP + diphosphate. It carries out the reaction 12-hydroxyoctadecanoate + ATP + CoA = 12-hydroxyoctadecanoyl-CoA + AMP + diphosphate. The catalysed reaction is 15-hydroxypentadecanoate + ATP + CoA = 15-hydroxypentadecanoyl-CoA + AMP + diphosphate. The enzyme catalyses 16-hydroxyhexadecanoate + ATP + CoA = 16-hydroxyhexadecanoyl-CoA + AMP + diphosphate. It catalyses the reaction 2-methylhexadecanoate + ATP + CoA = 2-methylhexadecanoyl-CoA + AMP + diphosphate. It carries out the reaction 3-methylundecanoate + ATP + CoA = 3-methylundecanoyl-CoA + AMP + diphosphate. The catalysed reaction is 12-methyltridecanoate + ATP + CoA = 12-methyltridecanoyl-CoA + AMP + diphosphate. The enzyme catalyses 12-methyloctadecanoate + ATP + CoA = 12-methyloctadecanoyl-CoA + AMP + diphosphate. Its function is as follows. Catalyzes the activation of medium/long-chain fatty acids as acyl-coenzyme A (acyl-CoA). May play a role in the uptake of fatty acids by trapping them metabolically as CoA esters. May also play an important role in the channeling of fatty acids into triacylglycerol (TAG) for use by Mycobacterium during its dormancy. The polypeptide is Medium/long-chain-fatty-acid--CoA ligase FadD6 (Mycobacterium tuberculosis (strain ATCC 25618 / H37Rv)).